A 512-amino-acid chain; its full sequence is PTS system mannitol-specific EIICB component (512 aa).

The Cytoplasmic segment spans residues 1 to 28; that stretch reads MSQTEEKKGIGRRVQAFGSFLSSMIMPN. The 333-residue stretch at 17 to 349 folds into the PTS EIIC type-2 domain; it reads FGSFLSSMIM…MKFTREPKQD (333 aa). A helical membrane pass occupies residues 29 to 50; the sequence is IGAFIAWGFIAAIFIDNGWLPN. The Extracellular segment spans residues 51 to 54; that stretch reads KDLA. A helical transmembrane segment spans residues 55–75; that stretch reads TLAGPMITYLIPLLIAFSGGR. Residues 76–139 are Cytoplasmic-facing; the sequence is LIYDLRGGII…QGFEMLFNNF (64 aa). Residues 140 to 161 traverse the membrane as a helical segment; that stretch reads SAGILGFIMTIAGFKILAPLMK. The Extracellular portion of the chain corresponds to 162-170; sequence FIMHILSVA. Residues 171-191 form a helical membrane-spanning segment; that stretch reads VEALVHAHLLPLVSILVEPAK. At 192–278 the chain is on the cytoplasmic side; sequence IVFLNNAINH…VLMRPLLFIA (87 aa). A helical transmembrane segment spans residues 279-298; sequence VILGGMTGVATYQATGFGFK. The Extracellular segment spans residues 299–318; it reads SPASPGSFIVYCLNAPRGEF. The chain crosses the membrane as a helical span at residues 319 to 340; the sequence is LHMLLGVFLAALVSFVVAALIM. At 341–512 the chain is on the cytoplasmic side; sequence KFTREPKQDL…LNNLKKDDQA (172 aa). A disordered region spans residues 355 to 402; the sequence is AQMENTKGKKSSVASKLVSSDKNVNTEENASGNVSETSSSDDDPEALL. The segment covering 365-376 has biased composition (low complexity); the sequence is SSVASKLVSSDK. Residues 380–392 show a composition bias toward polar residues; the sequence is TEENASGNVSETS. Residues 419–512 form the PTS EIIB type-2 domain; the sequence is NHVIFACDAG…LNNLKKDDQA (94 aa). The active-site Phosphocysteine intermediate; for EIIB activity is the C425. C425 is subject to Phosphocysteine; by EIIA.

Homodimer.

It localises to the cell membrane. It carries out the reaction D-mannitol(out) + N(pros)-phospho-L-histidyl-[protein] = D-mannitol 1-phosphate(in) + L-histidyl-[protein]. Its function is as follows. The phosphoenolpyruvate-dependent sugar phosphotransferase system (sugar PTS), a major carbohydrate active transport system, catalyzes the phosphorylation of incoming sugar substrates concomitantly with their translocation across the cell membrane. The enzyme II CmtAB PTS system is involved in D-mannitol transport. The chain is PTS system mannitol-specific EIICB component (mtlA) from Staphylococcus aureus (strain COL).